The following is a 358-amino-acid chain: Heterogeneous nuclear ribonucleoprotein A2 homolog 2 (358 aa).

2 consecutive RRM domains span residues 9 to 92 and 100 to 179; these read RKLF…ESAK and KKLF…LSKQ. Disordered stretches follow at residues 182–217 and 333–358; these read QDVQ…FRGG and YGGG…RNRY. Gly residues predominate over residues 193–217; it reads GNFGFGDSRGGGNFGSGPGGNFRGG. The tract at residues 309-352 is nuclear targeting sequence; the sequence is QQSSSYGPMKSGGNFGGNRSMGGPYGGGNYGPGNGSGASGGGGY.

Its subcellular location is the nucleus. Forms complexes (ribonucleosomes) with at least 20 other different hnRNP and heterogeneous nuclear RNA in the nucleus. The protein is Heterogeneous nuclear ribonucleoprotein A2 homolog 2 of Xenopus laevis (African clawed frog).